A 397-amino-acid polypeptide reads, in one-letter code: Serpin-Z7 (397 aa).

At Ala2 the chain carries N-acetylalanine. Positions 344-368 (GTKAGAATGDVIVDRSLPIRMDFVA) are RCL.

The protein belongs to the serpin family. As to expression, highly expressed in endosperm, at intermediate level in embryo and at lower levels in roots.

Functionally, inhibits chymotrypsin in vitro. The polypeptide is Serpin-Z7 (PAZ7) (Hordeum vulgare (Barley)).